The chain runs to 89 residues: Rho beta-crystallin (89 aa).

Position 31 (H31) interacts with substrate.

The protein belongs to the aldo/keto reductase family. Monomer.

In Lepidodactylus lugubris (Mourning gecko), this protein is Rho beta-crystallin.